The primary structure comprises 415 residues: Glutamyl-tRNA reductase (415 aa).

Substrate-binding positions include 49 to 52 (TCNR), Ser104, 109 to 111 (EPQ), and Gln115. Cys50 acts as the Nucleophile in catalysis. NADP(+) is bound at residue 184 to 189 (GAGEMI).

It belongs to the glutamyl-tRNA reductase family. As to quaternary structure, homodimer.

It carries out the reaction (S)-4-amino-5-oxopentanoate + tRNA(Glu) + NADP(+) = L-glutamyl-tRNA(Glu) + NADPH + H(+). The protein operates within porphyrin-containing compound metabolism; protoporphyrin-IX biosynthesis; 5-aminolevulinate from L-glutamyl-tRNA(Glu): step 1/2. Its function is as follows. Catalyzes the NADPH-dependent reduction of glutamyl-tRNA(Glu) to glutamate 1-semialdehyde (GSA). In Neisseria meningitidis serogroup C / serotype 2a (strain ATCC 700532 / DSM 15464 / FAM18), this protein is Glutamyl-tRNA reductase.